The chain runs to 54 residues: Ovomucoid (54 aa).

The region spanning 4–54 (VDCSDYPKPSCTLEDKPLCGSDNQTYSNKCSFCNAVVDSNGTLTLSHFGKC) is the Kazal-like domain. 3 disulfide bridges follow: C6-C36, C14-C33, and C22-C54. N43 carries an N-linked (GlcNAc...) asparagine glycan.

It is found in the secreted. The polypeptide is Ovomucoid (Megapodius freycinet (Dusky scrubfowl)).